We begin with the raw amino-acid sequence, 283 residues long: Tetrahydroxynaphthalene reductase (283 aa).

Residues 1-21 (MPAVTQPRGESKYDAIPGPLG) form a disordered region. 39–63 (RGIGREMAMELGRRGCKVIVNYANS) is an NADP(+) binding site. Serine 164 provides a ligand contact to substrate. The active-site Proton acceptor is tyrosine 178.

Belongs to the short-chain dehydrogenases/reductases (SDR) family. In terms of assembly, homotetramer.

The catalysed reaction is scytalone + NADP(+) = naphthalene-1,3,6,8-tetrol + NADPH + H(+). It functions in the pathway pigment biosynthesis; melanin biosynthesis. Functionally, catalyzes the NADPH-dependent reduction of 1,3,6,8-tetrahydroxynaphthalene (T4HN) into (+)-scytalone and 1,3,8-trihydroxynaphthalene into (-)-vermelone. This enzyme is the biochemical target of several commercially important fungicides which are used to prevent blast disease in rice plants. This is Tetrahydroxynaphthalene reductase from Pyricularia oryzae (strain 70-15 / ATCC MYA-4617 / FGSC 8958) (Rice blast fungus).